A 447-amino-acid polypeptide reads, in one-letter code: Serine/threonine-protein phosphatase 2A 55 kDa regulatory subunit B delta isoform (447 aa).

WD repeat units lie at residues 26–65 (AEAD…KSRP), 91–132 (EIEE…KRVE), 175–213 (AHTY…RSFN), 224–264 (ELTE…LCDR), 283–321 (EIIS…RPVE), 338–379 (ENDC…DITL), and 414–447 (DFNK…DKVN).

This sequence belongs to the phosphatase 2A regulatory subunit B family. PP2A consists of a common heterodimeric core enzyme, composed of a 36 kDa catalytic subunit (subunit C) and a 65 kDa constant regulatory subunit (PR65 or subunit A), that associates with a variety of regulatory subunits. Proteins that associate with the core dimer include three families of regulatory subunits B (the R2/B/PR55/B55, R3/B''/PR72/PR130/PR59 and R5/B'/B56 families), the 48 kDa variable regulatory subunit, viral proteins, and cell signaling molecules. Interacts with ensa (when phosphorylated at 'Ser-67') and arpp19 (when phosphorylated at 'Ser-67'), leading to inhibit PP2A activity.

It localises to the cytoplasm. Substrate-recognition subunit of protein phosphatase 2A (PP2A) that plays a key role in cell cycle by controlling mitosis entry and exit. The activity of PP2A complexes containing ppp2r2d (PR55-delta) fluctuate during the cell cycle: the activity is high in interphase and low in mitosis. During mitosis, activity of PP2A is inhibited via interaction with phosphorylated ensa and arpp19 inhibitors. PP2A complexes containing ppp2r2d (PR55-delta) also regulate the activity of TGF-beta/Activin/Nodal signaling by restricting receptor activity. Within the PP2A complexes, the B regulatory subunits modulate substrate selectivity and catalytic activity, and may also direct the localization of the catalytic enzyme to a particular subcellular compartment. This chain is Serine/threonine-protein phosphatase 2A 55 kDa regulatory subunit B delta isoform (ppp2r2d), found in Xenopus tropicalis (Western clawed frog).